The primary structure comprises 647 residues: Exoribonuclease 2 (647 aa).

An RNB domain is found at 190–519 (REDLTSLPFV…NHRLLKAIIK (330 aa)). Residues 564–646 (EQRFSAEVID…ETRSIVARPV (83 aa)) form the S1 motif domain.

This sequence belongs to the RNR ribonuclease family. RNase II subfamily.

The protein localises to the cytoplasm. It catalyses the reaction Exonucleolytic cleavage in the 3'- to 5'-direction to yield nucleoside 5'-phosphates.. Functionally, involved in mRNA degradation. Hydrolyzes single-stranded polyribonucleotides processively in the 3' to 5' direction. The chain is Exoribonuclease 2 from Erwinia tasmaniensis (strain DSM 17950 / CFBP 7177 / CIP 109463 / NCPPB 4357 / Et1/99).